Here is a 332-residue protein sequence, read N- to C-terminus: Arabinogalactan endo-beta-1,4-galactanase (332 aa).

Residue asparagine 111 is glycosylated (N-linked (GlcNAc...) asparagine). The active-site Proton donor is glutamate 135. Catalysis depends on glutamate 245, which acts as the Nucleophile.

This sequence belongs to the glycosyl hydrolase 53 family.

It carries out the reaction The enzyme specifically hydrolyzes (1-&gt;4)-beta-D-galactosidic linkages in type I arabinogalactans.. The chain is Arabinogalactan endo-beta-1,4-galactanase from Humicola insolens (Soft-rot fungus).